We begin with the raw amino-acid sequence, 366 residues long: Glucan organizing enzyme 1 (366 aa).

Residues 1–24 (MLPLWARGGKPIVIPLPQKRHITL) are Extracellular-facing. Residues 25–45 (PALPILLLLLGTGFLLHSLFF) traverse the membrane as a helical segment. At 46–366 (PPPPPHPPGK…ETYKKWKRGH (321 aa)) the chain is on the cytoplasmic side.

It belongs to the glycosyltransferase 32 family.

It localises to the cell membrane. Its function is as follows. Plays a role in the localization of glycogen rosettes to the plasma membrane. Required for correct cell wall organization and may facilitate the connection between beta-1,3-glucan and beta-1,6-glucan in the cell wall. This Cryptococcus neoformans var. grubii serotype A (strain H99 / ATCC 208821 / CBS 10515 / FGSC 9487) (Filobasidiella neoformans var. grubii) protein is Glucan organizing enzyme 1.